We begin with the raw amino-acid sequence, 570 residues long: Formate--tetrahydrofolate ligase (570 aa).

An ATP-binding site is contributed by 65–72; the sequence is TPFGEGKT.

This sequence belongs to the formate--tetrahydrofolate ligase family.

The catalysed reaction is (6S)-5,6,7,8-tetrahydrofolate + formate + ATP = (6R)-10-formyltetrahydrofolate + ADP + phosphate. It participates in one-carbon metabolism; tetrahydrofolate interconversion. The protein is Formate--tetrahydrofolate ligase of Shewanella woodyi (strain ATCC 51908 / MS32).